Reading from the N-terminus, the 469-residue chain is ATP-dependent protease ATPase subunit HslU (469 aa).

ATP-binding positions include I24, 66 to 71, D282, E347, and R419; that span reads GVGKTE.

The protein belongs to the ClpX chaperone family. HslU subfamily. In terms of assembly, a double ring-shaped homohexamer of HslV is capped on each side by a ring-shaped HslU homohexamer. The assembly of the HslU/HslV complex is dependent on binding of ATP.

The protein localises to the cytoplasm. Functionally, ATPase subunit of a proteasome-like degradation complex; this subunit has chaperone activity. The binding of ATP and its subsequent hydrolysis by HslU are essential for unfolding of protein substrates subsequently hydrolyzed by HslV. HslU recognizes the N-terminal part of its protein substrates and unfolds these before they are guided to HslV for hydrolysis. The protein is ATP-dependent protease ATPase subunit HslU of Listeria welshimeri serovar 6b (strain ATCC 35897 / DSM 20650 / CCUG 15529 / CIP 8149 / NCTC 11857 / SLCC 5334 / V8).